The primary structure comprises 69 residues: NAD(P)H-quinone oxidoreductase subunit O (69 aa).

This sequence belongs to the complex I NdhO subunit family. NDH-1 can be composed of about 15 different subunits; different subcomplexes with different compositions have been identified which probably have different functions.

The protein localises to the cellular thylakoid membrane. The enzyme catalyses a plastoquinone + NADH + (n+1) H(+)(in) = a plastoquinol + NAD(+) + n H(+)(out). It catalyses the reaction a plastoquinone + NADPH + (n+1) H(+)(in) = a plastoquinol + NADP(+) + n H(+)(out). NDH-1 shuttles electrons from an unknown electron donor, via FMN and iron-sulfur (Fe-S) centers, to quinones in the respiratory and/or the photosynthetic chain. The immediate electron acceptor for the enzyme in this species is believed to be plastoquinone. Couples the redox reaction to proton translocation, and thus conserves the redox energy in a proton gradient. Cyanobacterial NDH-1 also plays a role in inorganic carbon-concentration. This Acaryochloris marina (strain MBIC 11017) protein is NAD(P)H-quinone oxidoreductase subunit O.